The following is a 340-amino-acid chain: Inactive hyaluronidase B (340 aa).

Cystine bridges form between cysteine 21–cysteine 310 and cysteine 187–cysteine 199. 2 N-linked (GlcNAc...) asparagine glycosylation sites follow: asparagine 66 and asparagine 81.

The protein belongs to the glycosyl hydrolase 56 family. Post-translationally, N-glycosylated on at least two Asn residues by identical heptasaccharide units composed of Man, GlcNAc, and Fuc residues in the molar ration of 3:2:2. Expressed by the venom gland.

Its subcellular location is the secreted. Has no hyaluronidase activity. The chain is Inactive hyaluronidase B from Vespula vulgaris (Yellow jacket).